Here is a 351-residue protein sequence, read N- to C-terminus: MEDSQETSPSSNNSSEELSSALHLSKGMSIFLDILRRADKNDDGKLSFEEFKAYFADGVLSGEELHELFHTIDTHNTNNLDTEELCEYFSQHLGEYENVLAALEDLNLSILKAMGKTKKDYQEASNLEQFVTRFLLKETLNQLQSLQNSLECAMETTEEQTRQERQGPAKPEVLSIQWPGKRSSRRVQRHNSFSPNSPQFNVSGPGLLEEDNQWMTQINRLQKLIDRLEKKDLKLEPPEEEIIEGNTKSHIMLVQRQMSVIEEDLEEFQLALKHYVESASSQSGCLRISIQKLSNESRYMIYEFWENSSVWNSHLQTNYSKTFQRSNVDFLETPELTSTMLVPASWWILNN.

Phosphoserine is present on S4. EF-hand domains follow at residues 26–61 (KGMSIFLDILRRADKNDDGKLSFEEFKAYFADGVLS) and 60–95 (LSGEELHELFHTIDTHNTNNLDTEELCEYFSQHLGE). Residues D39, N41, D43, K45, and E50 each contribute to the Ca(2+) site. Positions 135–163 (LLKETLNQLQSLQNSLECAMETTEEQTRQ) form a coiled coil. The disordered stretch occupies residues 180–203 (GKRSSRRVQRHNSFSPNSPQFNVS). Residues 190-202 (HNSFSPNSPQFNV) are compositionally biased toward polar residues. Phosphoserine is present on residues S192 and S197. Positions 209 to 275 (EEDNQWMTQI…EEFQLALKHY (67 aa)) form a coiled coil. The 89-residue stretch at 252–340 (MLVQRQMSVI…LETPELTSTM (89 aa)) folds into the ABM domain.

In terms of assembly, interacts with STX1. May interact with CPNE6. In terms of tissue distribution, expressed in brain (at protein level).

It is found in the cytoplasm. This is N-terminal EF-hand calcium-binding protein 1 (NECAB1) from Homo sapiens (Human).